The primary structure comprises 318 residues: MSRNHRRIEMDLAVGSSSKHYGSSRSIVRRIATNLPLAPCPRVHFQLHPFASGASFLNSPNGPNVATLADVAWIDREESDGPGRIRCEADSGLVFRTQERRPLRRQRSLPSLHQVEPAQQSQTVINDEAIQKISVLETELAKLRAQIAQIVQAQEQSAQSTAPAPGGPPVPPPMVPVPPPPPPPPPCPTPSMQRSYSAIDLIRERRGKKAEQNTVLDSAPKKPELPNMLDVLKDMGKVKLRSVKSHQEDGNVKAKPVEPTDAAAMIAEALKRKFAHRYRNDSECDGTFTFTAFENKPHVETPLFGQHMLKSTGRRKMH.

Disordered stretches follow at residues 101-121 (RPLRRQRSLPSLHQVEPAQQS) and 154-193 (QEQSAQSTAPAPGGPPVPPPMVPVPPPPPPPPPCPTPSMQ). Residues 124-157 (VINDEAIQKISVLETELAKLRAQIAQIVQAQEQS) adopt a coiled-coil conformation. Low complexity predominate over residues 154–164 (QEQSAQSTAPA). Residues 165 to 189 (PGGPPVPPPMVPVPPPPPPPPPCPT) show a composition bias toward pro residues. The segment at 168–296 (PPVPPPMVPV…TFTFTAFENK (129 aa)) is necessary and sufficient to promote mitochondrial fission.

Belongs to the MTFR1 family.

It localises to the mitochondrion. Its function is as follows. May play a role in mitochondrial aerobic respiration. May also regulate mitochondrial organization and fission. This chain is Mitochondrial fission regulator 1 (mtfr1), found in Danio rerio (Zebrafish).